The sequence spans 221 residues: Queuosine precursor transporter (221 aa).

The Cytoplasmic portion of the chain corresponds to 1–12 (MNVFSQTQRYKA). A helical membrane pass occupies residues 13 to 33 (LFWLSLFHLLVITSSNYLVQL). Position 34 (proline 34) is a topological domain, periplasmic. Residues 35–55 (VSILGFHTTWGAFSFPFIFLA) traverse the membrane as a helical segment. Topologically, residues 56–70 (TDLTVRIFGAPLARR) are cytoplasmic. The helical transmembrane segment at 71-91 (IIFAVMIPALLISYVISSLFY) threads the bilayer. The Periplasmic segment spans residues 92 to 97 (MGSWQG). Residues 98 to 118 (FGALAHFNLFVARIATASFMA) traverse the membrane as a helical segment. Residues 119–143 (YALGQILDVHVFNRLRQSRRWWLAP) lie on the Cytoplasmic side of the membrane. The helical transmembrane segment at 144–164 (TASTLFGNVSDTLAFFFIAFW) threads the bilayer. Residues 165 to 184 (RSPDAFMAEHWMEIALVDYC) are Periplasmic-facing. The chain crosses the membrane as a helical span at residues 185-205 (FKVLISIVFFLPMYGVLLNML). Over 206–221 (LKRLADKSEINALQAS) the chain is Cytoplasmic.

It belongs to the vitamin uptake transporter (VUT/ECF) (TC 2.A.88) family. Q precursor transporter subfamily.

The protein resides in the cell inner membrane. In terms of biological role, involved in the import of queuosine (Q) precursors, required for Q precursor salvage. Transports 7-cyano-7-deazaguanine (preQ(0)) and 7-aminomethyl-7-deazaguanine (preQ(1)), with a preference for preQ(0). The chain is Queuosine precursor transporter (yhhQ) from Escherichia coli (strain K12).